The chain runs to 1469 residues: WASH complex subunit 2 (1469 aa).

A Phosphoserine modification is found at Ser-136. Disordered stretches follow at residues Tyr-178–Val-349 and Lys-367–Gly-546. The segment covering Ser-197–Lys-206 has biased composition (basic and acidic residues). Ser-227 carries the post-translational modification Phosphoserine. Low complexity-rich tracts occupy residues Ser-276–Pro-293 and Ser-306–Ser-316. The LFa 1 motif lies at Leu-351–Thr-372. A compositionally biased stretch (polar residues) spans Ser-370–Thr-385. Residues Glu-387–Pro-399 show a composition bias toward basic and acidic residues. Phosphoserine occurs at positions 422 and 426. Positions Phe-519–Asp-528 are enriched in acidic residues. An LFa 5 motif is present at residues Leu-550–Phe-563. Residues Ile-571–Ser-591 are disordered. Positions Glu-574–Val-585 are enriched in polar residues. Ser-580 bears the Phosphoserine mark. Thr-587 carries the phosphothreonine modification. The short motif at Leu-595 to Phe-605 is the LFa 6 element. Disordered regions lie at residues Thr-607–Phe-760, Ala-933–Ser-1254, and Val-1316–Lys-1469. Basic and acidic residues-rich tracts occupy residues Gly-626–His-649 and Thr-671–Thr-687. Residue Thr-693 is modified to Phosphothreonine. The LFa 8 motif lies at Leu-698–Phe-709. Composition is skewed to polar residues over residues Phe-709–Phe-728, Tyr-735–Pro-745, and Pro-938–Ser-956. Basic and acidic residues-rich tracts occupy residues Asp-971–Leu-990, Glu-1031–Glu-1042, and Arg-1077–Pro-1089. The segment covering Ala-1091 to Ser-1109 has biased composition (polar residues). The segment covering Asn-1118–Arg-1136 has biased composition (basic residues). A compositionally biased stretch (basic and acidic residues) spans Asp-1159–Ser-1170. Phosphoserine is present on residues Ser-1241, Ser-1245, Ser-1254, Ser-1344, Ser-1380, Ser-1381, and Ser-1408. Composition is skewed to low complexity over residues Phe-1417–Ala-1426 and Ala-1434–Thr-1452.

This sequence belongs to the FAM21 family. Component of the WASH complex.

In terms of biological role, acts at least in part as component of the WASH complex which may regulate wash nucleation-promoting factor (NPF) activity and is required for its membrane targeting during endosomal sorting. The protein is WASH complex subunit 2 of Drosophila melanogaster (Fruit fly).